A 204-amino-acid polypeptide reads, in one-letter code: Thiamine-phosphate synthase (204 aa).

4-amino-2-methyl-5-(diphosphooxymethyl)pyrimidine contacts are provided by residues 34–38 (QYRDK) and D66. Positions 67 and 86 each coordinate Mg(2+). A 4-amino-2-methyl-5-(diphosphooxymethyl)pyrimidine-binding site is contributed by S104. 131-133 (TST) contributes to the 2-[(2R,5Z)-2-carboxy-4-methylthiazol-5(2H)-ylidene]ethyl phosphate binding site. K134 is a binding site for 4-amino-2-methyl-5-(diphosphooxymethyl)pyrimidine. 2-[(2R,5Z)-2-carboxy-4-methylthiazol-5(2H)-ylidene]ethyl phosphate-binding positions include G160 and 180-181 (VS).

This sequence belongs to the thiamine-phosphate synthase family. Requires Mg(2+) as cofactor.

The catalysed reaction is 2-[(2R,5Z)-2-carboxy-4-methylthiazol-5(2H)-ylidene]ethyl phosphate + 4-amino-2-methyl-5-(diphosphooxymethyl)pyrimidine + 2 H(+) = thiamine phosphate + CO2 + diphosphate. It carries out the reaction 2-(2-carboxy-4-methylthiazol-5-yl)ethyl phosphate + 4-amino-2-methyl-5-(diphosphooxymethyl)pyrimidine + 2 H(+) = thiamine phosphate + CO2 + diphosphate. It catalyses the reaction 4-methyl-5-(2-phosphooxyethyl)-thiazole + 4-amino-2-methyl-5-(diphosphooxymethyl)pyrimidine + H(+) = thiamine phosphate + diphosphate. Its pathway is cofactor biosynthesis; thiamine diphosphate biosynthesis; thiamine phosphate from 4-amino-2-methyl-5-diphosphomethylpyrimidine and 4-methyl-5-(2-phosphoethyl)-thiazole: step 1/1. Its function is as follows. Condenses 4-methyl-5-(beta-hydroxyethyl)thiazole monophosphate (THZ-P) and 2-methyl-4-amino-5-hydroxymethyl pyrimidine pyrophosphate (HMP-PP) to form thiamine monophosphate (TMP). The protein is Thiamine-phosphate synthase of Picrophilus torridus (strain ATCC 700027 / DSM 9790 / JCM 10055 / NBRC 100828 / KAW 2/3).